The sequence spans 317 residues: Olfactory receptor 6P1 (317 aa).

The Extracellular segment spans residues 1–25 (MRNLSGGHVEEFVLVGFPTTPPLQL). Residue N3 is glycosylated (N-linked (GlcNAc...) asparagine). The chain crosses the membrane as a helical span at residues 26–46 (LLFVLFFAIYLLTLLENALIV). Over 47–54 (FTIWLAPS) the chain is Cytoplasmic. The chain crosses the membrane as a helical span at residues 55–75 (LHRPMYFFLGHLSFLELWYIN). The Extracellular portion of the chain corresponds to 76–99 (VTIPRLLAAFLTQDGRVSYVGCMT). A disulfide bridge links C97 with C189. Residues 100-120 (QLYFFIALACTECVLLAVMAY) form a helical membrane-spanning segment. Residues 121–139 (DRYLAICGPLLYPSLMPSS) lie on the Cytoplasmic side of the membrane. A helical transmembrane segment spans residues 140 to 160 (LATRLAAASWGSGFFSSMMKL). Residues 161–197 (LFISQLSYCGPNIINHFFCDISPLLNLTCSDKEQAEL) lie on the Extracellular side of the membrane. N186 is a glycosylation site (N-linked (GlcNAc...) asparagine). The helical transmembrane segment at 198–217 (VDFLLALVMILLPLLAVVSS) threads the bilayer. At 218–237 (YTAIIAAILRIPTSRGRHKA) the chain is on the cytoplasmic side. The chain crosses the membrane as a helical span at residues 238-258 (FSTCAAHLAVVVIYYSSTLFT). Residues 259–271 (YARPRAMYTFNHN) lie on the Extracellular side of the membrane. A helical membrane pass occupies residues 272–292 (KIISVLYTIIVPFFNPAIYCL). The Cytoplasmic portion of the chain corresponds to 293–317 (RNKEVKEAFRKTVMGRCHYPRDVQD).

The protein belongs to the G-protein coupled receptor 1 family.

The protein localises to the cell membrane. In terms of biological role, odorant receptor. In Homo sapiens (Human), this protein is Olfactory receptor 6P1 (OR6P1).